The sequence spans 306 residues: Ethylmalonyl-CoA decarboxylase (306 aa).

Lysine 216 is modified (N6-acetyllysine; alternate). An N6-succinyllysine; alternate modification is found at lysine 216.

This sequence belongs to the enoyl-CoA hydratase/isomerase family.

It is found in the cytoplasm. The protein localises to the cytosol. The catalysed reaction is (2S)-ethylmalonyl-CoA + H(+) = butanoyl-CoA + CO2. It carries out the reaction (S)-methylmalonyl-CoA + H(+) = propanoyl-CoA + CO2. It catalyses the reaction (2R)-ethylmalonyl-CoA + H(+) = butanoyl-CoA + CO2. Its function is as follows. Decarboxylates ethylmalonyl-CoA, a potentially toxic metabolite, to form butyryl-CoA, suggesting it might be involved in metabolite proofreading. Acts preferentially on (S)-ethylmalonyl-CoA but also has some activity on the (R)-isomer. Also has methylmalonyl-CoA decarboxylase activity at lower level. In Bos taurus (Bovine), this protein is Ethylmalonyl-CoA decarboxylase (ECHDC1).